The sequence spans 424 residues: MSDDDCDIFSAARKRIPEIALPKNPYNLGNDSFSKEVDYDFIEDLPKKSTKTGKRKNPAATRKNPPKSQDDASPPKQAEHKAVEPEEDMRTERSLSPVSLLILEMEKKNGQQSDVEKHAKENDVGPVARRTRSSLNRSEMAPPPVSPTVEVPTQTKPKKRGQKKRTSLTTTTSNSASMEVSLPSIVGQNNEHISRRWTLAEVAARSKVVDSIDLVSAVAPRVEGFVNLDSEDEGEKEAPPVVEEENIFDNDNPTIEVALSWLGEIQIYKLRQHQKFKHLFKELASRNGIDENDITVDMYYNFVGPEDTPHSIGLKSFHTLTGHPTKSHNNNNVAAKIDYNPEALCRKPKKFQVKVQADKWKHPLVIPMKKTDNFKIIFIKCAEELNCDPRTIKLFFDGDLLDPNDTPNNQDMEGNEVIDLKIKA.

Tyrosine 26 is subject to Phosphotyrosine. Serine 32 and serine 34 each carry phosphoserine. The tract at residues 45–177 (LPKKSTKTGK…LTTTTSNSAS (133 aa)) is disordered. Basic residues predominate over residues 48 to 57 (KSTKTGKRKN). The segment covering 77 to 93 (QAEHKAVEPEEDMRTER) has biased composition (basic and acidic residues). The residue at position 96 (serine 96) is a Phosphoserine. Residues 104–123 (EMEKKNGQQSDVEKHAKEND) show a composition bias toward basic and acidic residues. Residues 156–166 (KPKKRGQKKRT) show a composition bias toward basic residues. Residues 167–177 (SLTTTTSNSAS) are compositionally biased toward low complexity.

Forms a complex with dgrn; likely required for localization to the nuclear periphery. Interacts with the SMC5-SMC6 complex members SMC5 and SMC6/jnj following ionizing radiation (IR) to induce DNA damage. Interaction between the SMC5-SMC6 complex and the dgrn-Rad60 complex, may stabilize the association of heterochromatic DSBs with the nuclear periphery.

Its subcellular location is the nucleus. It localises to the nucleoplasm. In terms of biological role, required for repair of DNA double strand breaks which occur during replication or are induced by ionizing radiation (IR). Functions with dgrn and downstream of the SMC5-SMC6 complex to regulate strand break repair. Likely functions by stabilizing the association of heterochromatic double strand breaks (DSBs) with the nuclear periphery as part of the homologous recombination (HR) repair process. The protein is DNA repair protein Rad60 of Drosophila melanogaster (Fruit fly).